Here is a 299-residue protein sequence, read N- to C-terminus: Regucalcin (299 aa).

E18 is a binding site for a divalent metal cation. 3 residues coordinate substrate: R101, N103, and E121. K144 bears the N6-succinyllysine mark. A divalent metal cation contacts are provided by N154 and D204. The active-site Proton donor/acceptor is D204. K244 and K253 each carry N6-succinyllysine. S268 is modified (phosphoserine).

This sequence belongs to the SMP-30/CGR1 family. As to quaternary structure, monomer. Zn(2+) is required as a cofactor. The cofactor is Mn(2+). It depends on Ca(2+) as a cofactor. Requires Mg(2+) as cofactor. Co(2+) serves as cofactor. Post-translationally, the N-terminus is blocked. In terms of tissue distribution, detected in liver (at protein level). Hepatocytes and renal proximal tubular epithelium.

It localises to the cytoplasm. The enzyme catalyses D-glucono-1,5-lactone + H2O = D-gluconate + H(+). It functions in the pathway cofactor biosynthesis; L-ascorbate biosynthesis via UDP-alpha-D-glucuronate pathway; L-ascorbate from UDP-alpha-D-glucuronate: step 3/4. Its function is as follows. Gluconolactonase with low activity towards other sugar lactones, including gulonolactone and galactonolactone. Catalyzes a key step in ascorbic acid (vitamin C) biosynthesis. Can also hydrolyze diisopropyl phosphorofluoridate and phenylacetate (in vitro). Calcium-binding protein. Modulates Ca(2+) signaling, and Ca(2+)-dependent cellular processes and enzyme activities. The chain is Regucalcin (Rgn) from Rattus norvegicus (Rat).